The chain runs to 246 residues: Isoprenyl transferase (246 aa).

Asp18 is an active-site residue. Asp18 contributes to the Mg(2+) binding site. Residues 19 to 22 (GNGR), Trp23, Arg31, His35, and 63 to 65 (SAE) contribute to the substrate site. Catalysis depends on Asn66, which acts as the Proton acceptor. Residues Trp67, Arg69, Arg186, and 192–194 (RIS) contribute to the substrate site. Glu205 provides a ligand contact to Mg(2+).

The protein belongs to the UPP synthase family. Homodimer. It depends on Mg(2+) as a cofactor.

Functionally, catalyzes the condensation of isopentenyl diphosphate (IPP) with allylic pyrophosphates generating different type of terpenoids. The protein is Isoprenyl transferase of Geobacter sulfurreducens (strain ATCC 51573 / DSM 12127 / PCA).